Consider the following 190-residue polypeptide: Apolipoprotein M (190 aa).

Positions 1-17 (MFHQVWAALLYLYGLLF) are cleaved as a signal peptide. Intrachain disulfides connect C23–C169, C95–C185, and C130–C159. Positions 138 and 145 each coordinate tetradecanoate.

This sequence belongs to the calycin superfamily. Lipocalin family. Highly divergent. Interacts with LRP2; LRP2 mediates APOM renal uptake and subsequent lysosomal degradation. Expressed by the liver; secreted in plasma.

It localises to the secreted. Functionally, probably involved in lipid transport. Can bind sphingosine-1-phosphate, myristic acid, palmitic acid and stearic acid, retinol, all-trans-retinoic acid and 9-cis-retinoic acid. The sequence is that of Apolipoprotein M (Apom) from Rattus norvegicus (Rat).